Consider the following 224-residue polypeptide: UPF0758 protein Nmul_A2138 (224 aa).

The MPN domain maps to 102-224 (AMDSPGPVRA…TLSFAEQGLI (123 aa)). His173, His175, and Asp186 together coordinate Zn(2+). Positions 173 to 186 (HNHPSGAAEPSHAD) match the JAMM motif motif.

This sequence belongs to the UPF0758 family.

The polypeptide is UPF0758 protein Nmul_A2138 (Nitrosospira multiformis (strain ATCC 25196 / NCIMB 11849 / C 71)).